The primary structure comprises 703 residues: Solute carrier family 28 member 3 (703 aa).

A compositionally biased stretch (basic and acidic residues) spans 1–19 (MSRADPGKNSEPSESKMSL). A disordered region spans residues 1-93 (MSRADPGKNS…DPEDDSEDEH (93 aa)). The Cytoplasmic portion of the chain corresponds to 1–117 (MSRADPGKNS…FCRKHRVVLR (117 aa)). The segment covering 44–61 (QNTPGNSTVRNRVVQSGE) has biased composition (polar residues). Basic and acidic residues predominate over residues 63-72 (GHAKQDDRQI). The chain crosses the membrane as a helical span at residues 118–138 (STIWAVLLTGFLALVIAACAI). Over 139-143 (NFHRA) the chain is Extracellular. The chain crosses the membrane as a helical span at residues 144-164 (LPLFVITLVTIFFVIWDHLMA). At 165-188 (KYEQRIDDFLSPGRRLLDRHWFWL) the chain is on the cytoplasmic side. The chain crosses the membrane as a helical span at residues 189–209 (KWVVWSSLILAIILWLSLDTA). Residues 210–212 (KLG) lie on the Extracellular side of the membrane. A helical membrane pass occupies residues 213–234 (QQNLVSFGGLIMYLILLFLFSK). The Cytoplasmic segment spans residues 235–242 (HPTRVYWR). The helical transmembrane segment at 243–262 (PVFWGIGLQFLLGLLILRTR) threads the bilayer. The Extracellular portion of the chain corresponds to 263–299 (PGFVAFDWMGRQVQTFLGYTDTGARFVFGEKYTDHFF). The chain crosses the membrane as a helical span at residues 300–320 (AFKILPIVVFFSTVMSMLYYL). Residues 321–344 (GLMQWIIRKVGWLMLVTMGSSPIE) lie on the Cytoplasmic side of the membrane. An intramembrane region (helical) is located at residues 345 to 363 (SVVAAGNIFIGQTESPLLV). Residues 364-376 (QPYLPHVTKSELH) lie on the Cytoplasmic side of the membrane. Residues 377 to 399 (TIMTAGFATIAGSVLGAYISFGV) traverse the membrane as a helical segment. Residues 400–401 (SS) are Extracellular-facing. Residues 402-423 (THLLTASVMSAPAALAVAKLFW) form a helical membrane-spanning segment. The Cytoplasmic portion of the chain corresponds to 424-458 (PETEKPKITLKSAMKMENGDSRNLLEAASQGASSS). A helical membrane pass occupies residues 459–484 (IPLVANIAANLIAFLALLSFVNSALS). Residues 485-522 (WFGSMFNYPELSFELICSYIFMPFSFMMGVDWQDSFMV) are Extracellular-facing. The helical intramembrane region spans 523–542 (AKLIGYKTFFNEFVAYDHLS). At 543–581 (KLINLRKAAGPKFVNGVQQYMSIRSETIATYALCGFANF) the chain is on the extracellular side. Residues 582–592 (GSLGIVIGGLT) traverse the membrane as a helical segment. Topologically, residues 593-605 (SIAPSRKRDIASG) are cytoplasmic. A helical membrane pass occupies residues 606-628 (AMRALIAGTIACFMTACIAGILS). Over 629–703 (DTPVDINCHH…LNCNWIPNKL (75 aa)) the chain is Extracellular.

The protein belongs to the concentrative nucleoside transporter (CNT) (TC 2.A.41) family. In terms of assembly, homotrimer.

Its subcellular location is the cell membrane. It carries out the reaction thymidine(out) + 2 Na(+)(out) = thymidine(in) + 2 Na(+)(in). The enzyme catalyses cytidine(out) + 2 Na(+)(out) = cytidine(in) + 2 Na(+)(in). It catalyses the reaction uridine(out) + 2 Na(+)(out) = uridine(in) + 2 Na(+)(in). The catalysed reaction is adenosine(out) + 2 Na(+)(out) = adenosine(in) + 2 Na(+)(in). It carries out the reaction guanosine(out) + 2 Na(+)(out) = guanosine(in) + 2 Na(+)(in). The enzyme catalyses inosine(out) + 2 Na(+)(out) = inosine(in) + 2 Na(+)(in). Its function is as follows. Sodium-dependent, pyrimidine- and purine-selective. Involved in the homeostasis of endogenous nucleosides. Exhibits the transport characteristics of the nucleoside transport system cib or N3 subtype (N3/cib) (with marked transport of both thymidine and inosine). Employs a 2:1 sodium/nucleoside ratio. Also able to transport gemcitabine, 3'-azido-3'-deoxythymidine (AZT), ribavirin and 3-deazauridine. This is Solute carrier family 28 member 3 (Slc28a3) from Mus musculus (Mouse).